The primary structure comprises 284 residues: 2,3,4,5-tetrahydropyridine-2,6-dicarboxylate N-succinyltransferase (284 aa).

The substrate site is built by Arg111 and Asp148.

It belongs to the transferase hexapeptide repeat family. In terms of assembly, homotrimer.

It is found in the cytoplasm. The catalysed reaction is (S)-2,3,4,5-tetrahydrodipicolinate + succinyl-CoA + H2O = (S)-2-succinylamino-6-oxoheptanedioate + CoA. It participates in amino-acid biosynthesis; L-lysine biosynthesis via DAP pathway; LL-2,6-diaminopimelate from (S)-tetrahydrodipicolinate (succinylase route): step 1/3. This Brucella suis (strain ATCC 23445 / NCTC 10510) protein is 2,3,4,5-tetrahydropyridine-2,6-dicarboxylate N-succinyltransferase.